A 234-amino-acid polypeptide reads, in one-letter code: Glucosamine-6-phosphate deaminase (234 aa).

Asp62 serves as the catalytic Proton acceptor; for enolization step. Residue Asn128 is the For ring-opening step of the active site. Catalysis depends on His130, which acts as the Proton acceptor; for ring-opening step. Glu135 serves as the catalytic For ring-opening step.

This sequence belongs to the glucosamine/galactosamine-6-phosphate isomerase family. NagB subfamily.

It carries out the reaction alpha-D-glucosamine 6-phosphate + H2O = beta-D-fructose 6-phosphate + NH4(+). The protein operates within amino-sugar metabolism; N-acetylneuraminate degradation; D-fructose 6-phosphate from N-acetylneuraminate: step 5/5. Catalyzes the reversible isomerization-deamination of glucosamine 6-phosphate (GlcN6P) to form fructose 6-phosphate (Fru6P) and ammonium ion. This is Glucosamine-6-phosphate deaminase from Streptococcus equi subsp. zooepidemicus (strain MGCS10565).